The chain runs to 134 residues: uncharacterized protein (134 aa).

2 consecutive transmembrane segments (helical) span residues valine 49–valine 69 and leucine 71–valine 91.

It is found in the cell membrane. This is an uncharacterized protein from Mycobacterium tuberculosis (strain ATCC 25618 / H37Rv).